The sequence spans 147 residues: Large ribosomal subunit protein bL9 (147 aa).

It belongs to the bacterial ribosomal protein bL9 family.

Binds to the 23S rRNA. In Bacteroides fragilis (strain ATCC 25285 / DSM 2151 / CCUG 4856 / JCM 11019 / LMG 10263 / NCTC 9343 / Onslow / VPI 2553 / EN-2), this protein is Large ribosomal subunit protein bL9.